The chain runs to 409 residues: Peptidase T (409 aa).

Residue His-78 coordinates Zn(2+). The active site involves Asp-80. Residue Asp-140 coordinates Zn(2+). The Proton acceptor role is filled by Glu-173. 3 residues coordinate Zn(2+): Glu-174, Asp-196, and His-379.

Belongs to the peptidase M20B family. It depends on Zn(2+) as a cofactor.

The protein resides in the cytoplasm. It carries out the reaction Release of the N-terminal residue from a tripeptide.. In terms of biological role, cleaves the N-terminal amino acid of tripeptides. In Salmonella paratyphi A (strain ATCC 9150 / SARB42), this protein is Peptidase T.